The chain runs to 150 residues: Group IIC secretory phospholipase A2 (150 aa).

Residues 1–20 (MKGIAIFLVFIFYWTTSTLS) form the signal peptide. 8 disulfides stabilise this stretch: Cys46–Cys143, Cys48–Cys64, Cys63–Cys121, Cys69–Cys150, Cys70–Cys114, Cys79–Cys107, Cys97–Cys112, and Cys99–Cys105. Residues Tyr47, Gly49, and Gly51 each contribute to the Ca(2+) site. His67 is a catalytic residue. Asp68 provides a ligand contact to Ca(2+). Residue Asn92 is glycosylated (N-linked (GlcNAc...) asparagine). Residue Asp115 is part of the active site.

It belongs to the phospholipase A2 family. The cofactor is Ca(2+). In terms of tissue distribution, testis specific.

Its subcellular location is the secreted. The enzyme catalyses a 1,2-diacyl-sn-glycero-3-phosphocholine + H2O = a 1-acyl-sn-glycero-3-phosphocholine + a fatty acid + H(+). PA2 catalyzes the calcium-dependent hydrolysis of the 2-acyl groups in 3-sn-phosphoglycerides. Testis PA2 may be important in the production of prostaglandins, by the release of arachidonic acid, which in turn are necessary for the contractions of the seminiferous tubules and the testicular capsule; they also seem to decrease sperm transit time through the male reproductive tract. This is Group IIC secretory phospholipase A2 (Pla2g2c) from Mus musculus (Mouse).